A 192-amino-acid chain; its full sequence is uncharacterized protein (192 aa).

The stretch at 53–111 (CLKESVERARKVYLSLLKDYERKSREYEKAYENYLKELRTYRETLYRIKEDLKFYERIC) forms a coiled coil.

This is an uncharacterized protein from Aquifex aeolicus (strain VF5).